A 256-amino-acid polypeptide reads, in one-letter code: Small ribosomal subunit protein eS1 (256 aa).

Basic residues predominate over residues 1 to 18; sequence MAVGKNKRLSKGKKGIKK. The segment at 1 to 20 is disordered; that stretch reads MAVGKNKRLSKGKKGIKKRT. At Ala-2 the chain carries N-acetylalanine; partial.

Belongs to the eukaryotic ribosomal protein eS1 family. As to quaternary structure, component of the small ribosomal subunit. Mature ribosomes consist of a small (40S) and a large (60S) subunit. The 40S subunit contains about 33 different proteins and 1 molecule of RNA (18S). The 60S subunit contains about 49 different proteins and 3 molecules of RNA (25S, 5.8S and 5S).

The protein localises to the cytoplasm. This is Small ribosomal subunit protein eS1 (rps1) from Aspergillus flavus (strain ATCC 200026 / FGSC A1120 / IAM 13836 / NRRL 3357 / JCM 12722 / SRRC 167).